A 246-amino-acid polypeptide reads, in one-letter code: Probable transcriptional regulatory protein CLJ_B3338 (246 aa).

This sequence belongs to the TACO1 family.

The protein localises to the cytoplasm. This chain is Probable transcriptional regulatory protein CLJ_B3338, found in Clostridium botulinum (strain 657 / Type Ba4).